The sequence spans 416 residues: Tyrosine--tRNA ligase (416 aa).

Tyr39 serves as a coordination point for L-tyrosine. The short motif at 44–53 is the 'HIGH' region element; the sequence is CTASSLHVGS. L-tyrosine contacts are provided by Tyr176 and Gln180. Residues 236 to 240 carry the 'KMSKS' region motif; that stretch reads KMGKT. Lys239 contacts ATP. An S4 RNA-binding domain is found at 349–415; it reads ISLIDLLHDI…GKKRHIKVMV (67 aa).

It belongs to the class-I aminoacyl-tRNA synthetase family. TyrS type 1 subfamily. In terms of assembly, homodimer.

It localises to the cytoplasm. It catalyses the reaction tRNA(Tyr) + L-tyrosine + ATP = L-tyrosyl-tRNA(Tyr) + AMP + diphosphate + H(+). Catalyzes the attachment of tyrosine to tRNA(Tyr) in a two-step reaction: tyrosine is first activated by ATP to form Tyr-AMP and then transferred to the acceptor end of tRNA(Tyr). The sequence is that of Tyrosine--tRNA ligase from Wolbachia sp. subsp. Brugia malayi (strain TRS).